Reading from the N-terminus, the 413-residue chain is MKCGWREGNQIQLLENGDQFYPAVFEAIAQAQQKIILETFILFEDEVGKKLHTALLKAAQRGVKAEVLLDGYGSPDLSDAFVGELTSAGVIFRYYDPRPRLLGLRTNIFRRMHRKIVVIDDRIAFVGGINYSAEHMSDYGPQAKQDYAVRVEGPVVADILQFEVENLPGQSPARRWWKRHHQAEENRHPGEAQALFVWRDNEEHRDDIERHYLKMLTQAKREVIIANAYFFPGYRLLHAMRKAARRGVSVKLIVQGEPDMPIVKVGARLLYNYLVKGGVQVYEYRRRPLHGKVALMDDHWATVGSSNLDPLSLSLNLEANLIIHDRTFNQTLRDNLQGIIVNDCKQVDESMLPKRTWWNLTKSVLAFHFLRHFPALVGWLPAHTPHLAQVPPPAQPEMETQDRVDPENTGVKP.

PLD phosphodiesterase domains lie at I108 to H135 and R285 to S312. Catalysis depends on residues H113, K115, D120, H290, K292, and D297. A disordered region spans residues A388–P413.

Belongs to the phospholipase D family. Cardiolipin synthase subfamily. ClsB sub-subfamily.

It localises to the cell membrane. It catalyses the reaction 2 a 1,2-diacyl-sn-glycero-3-phospho-(1'-sn-glycerol) = a cardiolipin + glycerol. Its function is as follows. Catalyzes the phosphatidyl group transfer from one phosphatidylglycerol molecule to another to form cardiolipin (CL) (diphosphatidylglycerol) and glycerol. The sequence is that of Cardiolipin synthase B from Salmonella typhimurium (strain LT2 / SGSC1412 / ATCC 700720).